Here is a 926-residue protein sequence, read N- to C-terminus: Transcriptional activator protein acu-15 (926 aa).

The zn(2)-C6 fungal-type DNA-binding region spans 24–51 (CDRCRSKKIRCDGIRPCCSQCANVGFEC). Disordered stretches follow at residues 100–129 (KMHSNRSRSAEPPRSTPAAEIKRDSGTPAK), 602–649 (LPQS…SASL), and 667–801 (TPQH…TSTG). Residues 119-129 (EIKRDSGTPAK) are compositionally biased toward basic and acidic residues. Composition is skewed to low complexity over residues 623–632 (AQQGSPSPSA) and 669–681 (QHQQYQHQQLQQQ). 2 stretches are compositionally biased toward polar residues: residues 689–703 (ARSQTSFDNLRQKAQ) and 726–736 (RTSTGTQSTPN). Residues 740–792 (LSLSSPQSPVSPVQMRSQPHQLQQQQQQQPQPQQQQQQHQRSSIASSHSQQGQ) show a composition bias toward low complexity.

The protein localises to the nucleus. In terms of biological role, positive regulator of acetate induction. The sequence is that of Transcriptional activator protein acu-15 (acu-15) from Neurospora crassa (strain ATCC 24698 / 74-OR23-1A / CBS 708.71 / DSM 1257 / FGSC 987).